A 270-amino-acid polypeptide reads, in one-letter code: Energy-coupling factor transporter ATP-binding protein EcfA (270 aa).

An ABC transporter domain is found at 5–238 (VEIENLTFFY…QLLEQNGLKA (234 aa)). 38 to 45 (GHNGAGKS) contributes to the ATP binding site.

The protein belongs to the ABC transporter superfamily. Energy-coupling factor EcfA family. Forms a stable energy-coupling factor (ECF) transporter complex composed of 2 membrane-embedded substrate-binding proteins (S component), 2 ATP-binding proteins (A component) and 2 transmembrane proteins (T component).

It is found in the cell membrane. Its function is as follows. ATP-binding (A) component of a common energy-coupling factor (ECF) ABC-transporter complex. Unlike classic ABC transporters this ECF transporter provides the energy necessary to transport a number of different substrates. The protein is Energy-coupling factor transporter ATP-binding protein EcfA of Carboxydothermus hydrogenoformans (strain ATCC BAA-161 / DSM 6008 / Z-2901).